Consider the following 31-residue polypeptide: Cuticle protein 54 (31 aa).

2 consecutive repeat copies span residues 7–10 and 13–17.

Functionally, component of the cuticle of migratory locust which contains more than 100 different structural proteins. This is Cuticle protein 54 from Locusta migratoria (Migratory locust).